Reading from the N-terminus, the 357-residue chain is Outer membrane porin protein OmpD (357 aa).

Positions 1-21 are cleaved as a signal peptide; sequence MKLKLVAVAVTTLLAAGAVNA.

It belongs to the Gram-negative porin family. As to quaternary structure, homotrimer.

The protein resides in the cell outer membrane. In terms of biological role, forms pores that allow passive diffusion of small molecules across the outer membrane. The polypeptide is Outer membrane porin protein OmpD (ompD) (Citrobacter koseri (strain ATCC BAA-895 / CDC 4225-83 / SGSC4696)).